The chain runs to 145 residues: Methyl-coenzyme M reductase I operon protein D (145 aa).

As to quaternary structure, MCR is composed of three subunits: alpha, beta, and gamma. The function of proteins C and D is not known.

The chain is Methyl-coenzyme M reductase I operon protein D (mcrD) from Methanothermobacter marburgensis (strain ATCC BAA-927 / DSM 2133 / JCM 14651 / NBRC 100331 / OCM 82 / Marburg) (Methanobacterium thermoautotrophicum).